Here is a 427-residue protein sequence, read N- to C-terminus: 3-phosphoshikimate 1-carboxyvinyltransferase (427 aa).

3-phosphoshikimate is bound by residues Lys-20, Ser-21, and Arg-25. Lys-20 serves as a coordination point for phosphoenolpyruvate. Phosphoenolpyruvate is bound by residues Gly-92 and Arg-120. Positions 166, 168, 312, and 339 each coordinate 3-phosphoshikimate. Gln-168 serves as a coordination point for phosphoenolpyruvate. Asp-312 acts as the Proton acceptor in catalysis. Residues Arg-343 and Arg-385 each contribute to the phosphoenolpyruvate site.

This sequence belongs to the EPSP synthase family. In terms of assembly, monomer.

It localises to the cytoplasm. It carries out the reaction 3-phosphoshikimate + phosphoenolpyruvate = 5-O-(1-carboxyvinyl)-3-phosphoshikimate + phosphate. The protein operates within metabolic intermediate biosynthesis; chorismate biosynthesis; chorismate from D-erythrose 4-phosphate and phosphoenolpyruvate: step 6/7. Its function is as follows. Catalyzes the transfer of the enolpyruvyl moiety of phosphoenolpyruvate (PEP) to the 5-hydroxyl of shikimate-3-phosphate (S3P) to produce enolpyruvyl shikimate-3-phosphate and inorganic phosphate. This Streptococcus thermophilus (strain CNRZ 1066) protein is 3-phosphoshikimate 1-carboxyvinyltransferase.